The chain runs to 306 residues: Beta-lactamase 1 (306 aa).

A signal peptide spans 1-43 (MKNKKMLKIGMCVGILGLSITSLVTFTGGALQVEAKEKTGQVK). Ser-89 acts as the Acyl-ester intermediate in catalysis. Residue Glu-185 is the Proton acceptor of the active site. Residue 251–253 (KSG) coordinates substrate.

It belongs to the class-A beta-lactamase family.

Its subcellular location is the secreted. The catalysed reaction is a beta-lactam + H2O = a substituted beta-amino acid. Acts preferentially on penicillins. This Bacillus cereus protein is Beta-lactamase 1 (penPC).